The primary structure comprises 485 residues: Glutamate--tRNA ligase (485 aa).

A 'HIGH' region motif is present at residues 12-22; sequence PSPTGEPHVGT. A 'KMSKS' region motif is present at residues 253–257; sequence KLSKR. Position 256 (Lys256) interacts with ATP.

It belongs to the class-I aminoacyl-tRNA synthetase family. Glutamate--tRNA ligase type 1 subfamily. In terms of assembly, monomer.

It localises to the cytoplasm. It catalyses the reaction tRNA(Glu) + L-glutamate + ATP = L-glutamyl-tRNA(Glu) + AMP + diphosphate. Functionally, catalyzes the attachment of glutamate to tRNA(Glu) in a two-step reaction: glutamate is first activated by ATP to form Glu-AMP and then transferred to the acceptor end of tRNA(Glu). The polypeptide is Glutamate--tRNA ligase (Rhizobium meliloti (strain 1021) (Ensifer meliloti)).